Consider the following 345-residue polypeptide: Dihydroorotase (345 aa).

Zn(2+)-binding residues include histidine 13 and histidine 15. Residues 15-17 and asparagine 41 each bind substrate; that span reads HFR. Residues lysine 98, histidine 135, and histidine 173 each coordinate Zn(2+). Position 98 is an N6-carboxylysine (lysine 98). Histidine 135 provides a ligand contact to substrate. Leucine 218 provides a ligand contact to substrate. A Zn(2+)-binding site is contributed by aspartate 246. Aspartate 246 is a catalytic residue. Substrate contacts are provided by histidine 250 and alanine 262.

The protein belongs to the metallo-dependent hydrolases superfamily. DHOase family. Class II DHOase subfamily. In terms of assembly, homodimer. Zn(2+) serves as cofactor.

The catalysed reaction is (S)-dihydroorotate + H2O = N-carbamoyl-L-aspartate + H(+). The protein operates within pyrimidine metabolism; UMP biosynthesis via de novo pathway; (S)-dihydroorotate from bicarbonate: step 3/3. Its function is as follows. Catalyzes the reversible cyclization of carbamoyl aspartate to dihydroorotate. This chain is Dihydroorotase, found in Shewanella piezotolerans (strain WP3 / JCM 13877).